We begin with the raw amino-acid sequence, 671 residues long: UvrABC system protein C (671 aa).

One can recognise a GIY-YIG domain in the interval 16–95; it reads TTPGVYRFRD…IKEFKPRFNV (80 aa). Positions 207–242 constitute a UVR domain; it reads KRFISRLEKDMAAAVAELDYERAAGLRDDIIALRKV.

The protein belongs to the UvrC family. Interacts with UvrB in an incision complex.

The protein localises to the cytoplasm. In terms of biological role, the UvrABC repair system catalyzes the recognition and processing of DNA lesions. UvrC both incises the 5' and 3' sides of the lesion. The N-terminal half is responsible for the 3' incision and the C-terminal half is responsible for the 5' incision. In Paenarthrobacter aurescens (strain TC1), this protein is UvrABC system protein C.